Reading from the N-terminus, the 91-residue chain is Small ribosomal subunit protein bS20 (91 aa).

2 disordered regions span residues 1–26 and 67–91; these read MALR…RSRK and HKNA…AQQS.

This sequence belongs to the bacterial ribosomal protein bS20 family.

Functionally, binds directly to 16S ribosomal RNA. The sequence is that of Small ribosomal subunit protein bS20 from Deinococcus deserti (strain DSM 17065 / CIP 109153 / LMG 22923 / VCD115).